The sequence spans 980 residues: GPI inositol-deacylase (980 aa).

Topologically, residues methionine 1–cysteine 7 are cytoplasmic. Residues alanine 8–valine 28 form a helical membrane-spanning segment. The Lumenal segment spans residues glutamate 29–arginine 628. Residue serine 170 is part of the active site. N-linked (GlcNAc...) asparagine glycosylation is found at asparagine 427, asparagine 517, and asparagine 596. A helical membrane pass occupies residues leucine 629–leucine 649. The Cytoplasmic portion of the chain corresponds to arginine 650–serine 709. Residues isoleucine 710–alanine 730 traverse the membrane as a helical segment. Residues leucine 731–threonine 774 are Lumenal-facing. The chain crosses the membrane as a helical span at residues alanine 775–leucine 795. Over serine 796–histidine 867 the chain is Cytoplasmic. The interval alanine 821 to glutamate 853 is disordered. Residues glutamate 824–glutamate 834 are compositionally biased toward acidic residues. The chain crosses the membrane as a helical span at residues valine 868–tryptophan 888. The Lumenal portion of the chain corresponds to leucine 889–glycine 895. The chain crosses the membrane as a helical span at residues isoleucine 896–leucine 916. At leucine 917–tryptophan 929 the chain is on the cytoplasmic side. The chain crosses the membrane as a helical span at residues methionine 930 to isoleucine 950. Over tyrosine 951–threonine 954 the chain is Lumenal. The helical transmembrane segment at tyrosine 955–glycine 975 threads the bilayer. Topologically, residues arginine 976 to valine 980 are cytoplasmic.

Belongs to the GPI inositol-deacylase family.

It is found in the endoplasmic reticulum membrane. Its function is as follows. Involved in inositol deacylation of GPI-anchored proteins. The chain is GPI inositol-deacylase from Drosophila melanogaster (Fruit fly).